An 894-amino-acid polypeptide reads, in one-letter code: LRR receptor-like serine/threonine-protein kinase IOS1 (894 aa).

A signal peptide spans M1–A23. The Extracellular segment spans residues Q24 to P515. N-linked (GlcNAc...) asparagine glycans are attached at residues N48, N95, N137, N179, N223, N230, N260, N287, N309, N338, N399, N441, N462, and N469. 2 LRR repeats span residues L431–T457 and K459–K479. A helical membrane pass occupies residues V516–L536. Residues K537–R894 lie on the Cytoplasmic side of the membrane. Phosphothreonine is present on T577. The 273-residue stretch at N586–L858 folds into the Protein kinase domain. Residues L592 to V600 and K613 each bind ATP. Y658 bears the Phosphotyrosine mark. Residue D710 is the Proton acceptor of the active site. S744 carries the phosphoserine modification. Residues T745 and T750 each carry the phosphothreonine modification. Y758 carries the post-translational modification Phosphotyrosine.

This sequence belongs to the protein kinase superfamily. Ser/Thr protein kinase family. In terms of assembly, homodimerization. Interacts with BAK1 and FLS2; triggers FLS2-BAK1 complex formation upon microbe-associated molecular patterns (MAMPs) treatment. Also binds to CERK1 and EFR. Expressed in roots, cotyledons, leaves, flowers and siliques.

It is found in the cell membrane. Its function is as follows. Negatively regulates the abscisic acid (ABA) signaling pathway. Required for full susceptibility to filamentous (hemi)biotrophic oomycetes (e.g. H.arabidopsidis and P.parasitica) and fungal (e.g. E.cruciferarum) pathogens, probably by triggering the repression of ABA-sensitive COLD REGULATED and RESISTANCE TO DESICCATION genes during infection, but independently of immune responses. Involved in BAK1-dependent and BAK1-independent microbe-associated molecular patterns (MAMPs)-triggered immunity (PTI) leading to defense responses, including callose deposition and MAPK cascade activation, toward pathogenic bacteria (e.g. P.syringae). Required for chitin-mediated PTI. This chain is LRR receptor-like serine/threonine-protein kinase IOS1, found in Arabidopsis thaliana (Mouse-ear cress).